The primary structure comprises 732 residues: uncharacterized protein (732 aa).

The protein belongs to the mimivirus L137 family.

This is an uncharacterized protein from Acanthamoeba polyphaga mimivirus (APMV).